Consider the following 441-residue polypeptide: Serine/threonine-protein phosphatase 4 regulatory subunit 2 (441 aa).

Residues 201-213 show a composition bias toward acidic residues; that stretch reads DEEEGFFDGDEDR. Disordered regions lie at residues 201–220, 242–348, and 364–418; these read DEEEGFFDGDEDREMGNKSK, INDD…LTTP, and SPSS…SQED. The segment covering 249 to 261 has biased composition (polar residues); it reads NKGQNCQSDVTKN. Acidic residues predominate over residues 264-302; it reads DDEDDDDNDDDYREDGADEDDEDDDHMGSTDDDEDDDED. The residue at position 347 (Thr-347) is a Phosphothreonine. Basic and acidic residues predominate over residues 388–398; sequence EDAHENHEGRS.

The protein belongs to the PPP4R2 family. As to quaternary structure, regulatory subunit (R2) of the histone H2A phosphatase complex (HTP-C) consisting of PPH3, PSY2 and PSY4. Interacts with SPT4 and SPT5.

The protein resides in the nucleus. Its function is as follows. Regulatory subunit of the histone H2A phosphatase complex, which dephosphorylates H2AS128ph (gamma-H2A) that has been displaced from sites of DNA lesions in the double-stranded DNA break repair process. Dephosphorylation is necessary for efficient recovery from the DNA damage checkpoint. In Saccharomyces cerevisiae (strain ATCC 204508 / S288c) (Baker's yeast), this protein is Serine/threonine-protein phosphatase 4 regulatory subunit 2 (PSY4).